The sequence spans 1800 residues: U3 small nucleolar RNA-associated protein 10 (1800 aa).

2 HEAT repeats span residues phenylalanine 426–alanine 467 and aspartate 581–lysine 619. A run of 2 helical transmembrane segments spans residues isoleucine 944 to asparagine 964 and alanine 1000 to methionine 1020. HEAT repeat units lie at residues aspartate 1043–histidine 1081, threonine 1250–glutamate 1288, glutamine 1294–arginine 1333, and leucine 1755–glutamate 1793.

It belongs to the HEATR1/UTP10 family. In terms of assembly, component of the ribosomal small subunit (SSU) processome.

Its subcellular location is the nucleus. The protein resides in the nucleolus. It localises to the membrane. Its function is as follows. Involved in nucleolar processing of pre-18S ribosomal RNA. Involved in ribosome biosynthesis. The polypeptide is U3 small nucleolar RNA-associated protein 10 (Aspergillus niger (strain ATCC MYA-4892 / CBS 513.88 / FGSC A1513)).